Consider the following 621-residue polypeptide: Phosphatidylinositol-3,5-bisphosphate 3-phosphatase MTMR6 (621 aa).

In terms of domain architecture, GRAM spans 1–101 (MEHIRTTKVE…YNSLLQLSKQ (101 aa)). The tract at residues 2–141 (EHIRTTKVEQ…EEYKRMGVPN (140 aa)) is interaction with RAB1B. Tyr108 bears the Phosphotyrosine mark. In terms of domain architecture, Myotubularin phosphatase spans 124 to 499 (GWQLIDLAEE…FNFKFWRNMY (376 aa)). Residues Asn248, Asn273, and Ile274 each coordinate a 1,2-diacyl-sn-glycero-3-phospho-(1D-myo-inositol-3,5-bisphosphate). Positions 248, 273, and 274 each coordinate a 1,2-diacyl-sn-glycero-3-phospho-(1D-myo-inositol-3-phosphate). The active-site Phosphocysteine intermediate is the Cys336. A 1,2-diacyl-sn-glycero-3-phospho-(1D-myo-inositol-3,5-bisphosphate)-binding residues include Ser337, Asp338, Gly339, Trp340, Asp341, Arg342, Lys378, and Arg382. A 1,2-diacyl-sn-glycero-3-phospho-(1D-myo-inositol-3-phosphate) is bound by residues Ser337, Asp338, Gly339, Trp340, Asp341, and Arg342. Arg382 is a binding site for a 1,2-diacyl-sn-glycero-3-phospho-(1D-myo-inositol-3-phosphate). 4 positions are modified to phosphoserine: Ser556, Ser561, Ser589, and Ser611.

It belongs to the protein-tyrosine phosphatase family. Non-receptor class myotubularin subfamily. Homodimer. Heterodimer (via C-terminus) with MTMR9 (via C-terminus). Interacts with ALKBH4. Interacts with KCNN4. Interacts (via GRAM domain) with RAB1B (in GDP-bound form); the interaction regulates MTMR6 recruitment to the endoplasmic reticulum-Golgi intermediate compartment. As to expression, expressed in CD4+ T-cells.

It is found in the cytoplasm. It localises to the endoplasmic reticulum-Golgi intermediate compartment. Its subcellular location is the endoplasmic reticulum. The protein resides in the cell projection. The protein localises to the ruffle membrane. It is found in the perinuclear region. The catalysed reaction is a 1,2-diacyl-sn-glycero-3-phospho-(1D-myo-inositol-3,5-bisphosphate) + H2O = a 1,2-diacyl-sn-glycero-3-phospho-(1D-myo-inositol-5-phosphate) + phosphate. It catalyses the reaction a 1,2-diacyl-sn-glycero-3-phospho-(1D-myo-inositol-3-phosphate) + H2O = a 1,2-diacyl-sn-glycero-3-phospho-(1D-myo-inositol) + phosphate. The enzyme catalyses 1,2-dioctanoyl-sn-glycero-3-phospho-(1D-myo-inositol-3,5-bisphosphate) + H2O = 1,2-dioctanoyl-sn-glycero-3-phospho-(1D-myo-inositol-5-phosphate) + phosphate. It carries out the reaction 1,2-dioctanoyl-sn-glycero-3-phospho-(1-D-myo-inositol-3-phosphate) + H2O = 1,2-dioctanoyl-sn-glycero-3-phospho-(1D-myo-inositol) + phosphate. Its activity is regulated as follows. Allosterically activated by phosphatidylserine and/or phosphatidylinositol 4-phosphate (PtdIns(4)P), and phosphatidylinositol 5-phosphate (PtdIns(5)P). Interaction with MTMR9 increases catalytic activity towards phosphatidylinositol 3,5-bisphosphate. In terms of biological role, lipid phosphatase that specifically dephosphorylates the D-3 position of phosphatidylinositol 3-phosphate and phosphatidylinositol 3,5-bisphosphate, generating phosphatidylinositol and phosphatidylinositol 5-phosphate. Binds with high affinity to phosphatidylinositol 3,5-bisphosphate (PtdIns(3,5)P2) but also to phosphatidylinositol 3-phosphate (PtdIns(3)P), phosphatidylinositol 4-phosphate (PtdIns(4)P), and phosphatidylinositol 5-phosphate (PtdIns(5)P), phosphatidic acid and phosphatidylserine. Negatively regulates ER-Golgi protein transport. Probably in association with MTMR9, plays a role in the late stages of macropinocytosis by dephosphorylating phosphatidylinositol 3-phosphate in membrane ruffles. Acts as a negative regulator of KCNN4/KCa3.1 channel activity in CD4(+) T-cells possibly by decreasing intracellular levels of phosphatidylinositol 3-phosphate. Negatively regulates proliferation of reactivated CD4(+) T-cells. In complex with MTMR9, negatively regulates DNA damage-induced apoptosis. The formation of the MTMR6-MTMR9 complex stabilizes both MTMR6 and MTMR9 protein levels. The chain is Phosphatidylinositol-3,5-bisphosphate 3-phosphatase MTMR6 from Homo sapiens (Human).